The primary structure comprises 209 residues: Urease accessory protein UreG (209 aa).

Position 18-25 (G18–T25) interacts with GTP.

The protein belongs to the SIMIBI class G3E GTPase family. UreG subfamily. In terms of assembly, homodimer. UreD, UreF and UreG form a complex that acts as a GTP-hydrolysis-dependent molecular chaperone, activating the urease apoprotein by helping to assemble the nickel containing metallocenter of UreC. The UreE protein probably delivers the nickel.

It is found in the cytoplasm. Its function is as follows. Facilitates the functional incorporation of the urease nickel metallocenter. This process requires GTP hydrolysis, probably effectuated by UreG. This is Urease accessory protein UreG from Cupriavidus pinatubonensis (strain JMP 134 / LMG 1197) (Cupriavidus necator (strain JMP 134)).